Consider the following 72-residue polypeptide: Translational regulator CsrA (72 aa).

It belongs to the CsrA/RsmA family. As to quaternary structure, homodimer; the beta-strands of each monomer intercalate to form a hydrophobic core, while the alpha-helices form wings that extend away from the core.

It is found in the cytoplasm. A translational regulator that binds mRNA to regulate translation initiation and/or mRNA stability. Usually binds in the 5'-UTR at or near the Shine-Dalgarno sequence preventing ribosome-binding, thus repressing translation. Its main target seems to be the major flagellin gene, while its function is anatagonized by FliW. The sequence is that of Translational regulator CsrA from Clostridium botulinum (strain Loch Maree / Type A3).